A 71-amino-acid chain; its full sequence is Heat-stable enterotoxin A (71 aa).

The N-terminal stretch at 1 to 19 is a signal peptide; it reads MKKIVFVLVLMLSSFGAFG. Positions 20-53 are excised as a propeptide; sequence QETVSGQFSDALSTPITAEVYKQACDPPLPPAEV. 3 cysteine pairs are disulfide-bonded: C59-C64, C60-C68, and C63-C71.

The protein belongs to the heat-stable enterotoxin family.

The protein resides in the secreted. Toxin which activates the particulate form of guanylate cyclase and increases cyclic GMP levels within the host intestinal epithelial cells. The chain is Heat-stable enterotoxin A (ystA) from Yersinia enterocolitica.